We begin with the raw amino-acid sequence, 383 residues long: Envelope glycoprotein D (383 aa).

The signal sequence occupies residues 1–30; sequence MPAATMATPGYLACRTSVATLLFFVLLRRA. Over 31–358 the chain is Virion surface; that stretch reads AILGAGGAPS…PKVVGPTVGP (328 aa). Disulfide bonds link Cys-76-Cys-197, Cys-115-Cys-212, and Cys-127-Cys-136. A profusion region spans residues 244–311; it reads YQDKLKVASP…TSASGVIEIE (68 aa). A disordered region spans residues 315-349; sequence ESDVRLVSYPPPTLPSPGPGGNENGAGYSDNRPDP. Over residues 323–332 the composition is skewed to pro residues; sequence YPPPTLPSPG. The helical transmembrane segment at 359 to 379 threads the bilayer; it reads GAIILVVMCAPILIGLTAFTI. Topologically, residues 380 to 383 are intravirion; sequence RKYC.

This sequence belongs to the herpesviridae glycoprotein D family.

The protein resides in the virion membrane. Functionally, envelope glycoprotein that binds to host cell entry receptors, promoting the virus entry into host cells. May trigger fusion with host membrane, by recruiting the fusion machinery composed of gB and gH/gL. The protein is Envelope glycoprotein D (US6) of Amazona oratrix (yellow-headed parrot).